A 378-amino-acid polypeptide reads, in one-letter code: Putative glutamate--cysteine ligase 2 (378 aa).

Belongs to the glutamate--cysteine ligase type 2 family. YbdK subfamily.

The catalysed reaction is L-cysteine + L-glutamate + ATP = gamma-L-glutamyl-L-cysteine + ADP + phosphate + H(+). Functionally, ATP-dependent carboxylate-amine ligase which exhibits weak glutamate--cysteine ligase activity. This is Putative glutamate--cysteine ligase 2 from Leifsonia xyli subsp. xyli (strain CTCB07).